We begin with the raw amino-acid sequence, 187 residues long: Rusticyanin (187 aa).

The signal sequence occupies residues 1–32 (MYTQNTMKKNWYVTVGAAAALAATVGMGTAMA). The Plastocyanin-like domain occupies 85-187 (SFEVHDKKNP…TGMFGKIVVK (103 aa)). Residues His117, Cys170, His175, and Met180 each contribute to the Cu cation site.

In terms of assembly, monomer. Cu cation is required as a cofactor.

The protein resides in the periplasm. Its function is as follows. Electron carrier from cytochrome c552 to the A-type oxidase. The sequence is that of Rusticyanin (rus) from Acidithiobacillus ferrooxidans (strain ATCC 23270 / DSM 14882 / CIP 104768 / NCIMB 8455) (Ferrobacillus ferrooxidans (strain ATCC 23270)).